The chain runs to 504 residues: Maturase K (504 aa).

The protein belongs to the intron maturase 2 family. MatK subfamily.

The protein localises to the plastid. It localises to the chloroplast. Its function is as follows. Usually encoded in the trnK tRNA gene intron. Probably assists in splicing its own and other chloroplast group II introns. This chain is Maturase K, found in Quercus cerris (Turkey oak).